The sequence spans 290 residues: Membrane protein insertase YidC 1 (290 aa).

Positions 1–19 (MKKKALLPLFLGIMIFLAG) are cleaved as a signal peptide. Cys-20 carries the N-palmitoyl cysteine lipid modification. Cys-20 is lipidated: S-diacylglycerol cysteine. The next 5 membrane-spanning stretches (helical) occupy residues 56-76 (FGLA…PFML), 134-154 (MLGC…YFVL), 176-196 (PDIW…VVSS), 211-231 (MVIS…ALGL), and 232-252 (YWSV…IYYS). Residues 270-290 (HNPYSKKKGKNTQVVSKKNKK) are disordered. The span at 280-290 (NTQVVSKKNKK) shows a compositional bias: polar residues.

This sequence belongs to the OXA1/ALB3/YidC family. Type 2 subfamily.

Its subcellular location is the cell membrane. Its function is as follows. Required for the insertion and/or proper folding and/or complex formation of integral membrane proteins into the membrane. Involved in integration of membrane proteins that insert both dependently and independently of the Sec translocase complex, as well as at least some lipoproteins. The chain is Membrane protein insertase YidC 1 from Staphylococcus epidermidis (strain ATCC 12228 / FDA PCI 1200).